Reading from the N-terminus, the 31-residue chain is Small protein MgtS (31 aa).

The Periplasmic segment spans residues 1-4; that stretch reads MLGN. The helical transmembrane segment at 5–25 threads the bilayer; that stretch reads MNVFMAVLGIILFSGFLAAYF. Residues 26–31 lie on the Cytoplasmic side of the membrane; the sequence is SHKWDD.

As to quaternary structure, interacts with MgtA.

It is found in the cell inner membrane. Modulates intracellular Mg(2+) levels to maintain cellular integrity upon Mg(2+) limitation. Acts by binding and stabilizing the Mg(2+) transporter MgtA, thereby leading to increased intracellular level of Mg(2+). May inhibit FtsH proteolysis of MgtA. In Escherichia coli (strain K12), this protein is Small protein MgtS.